A 208-amino-acid chain; its full sequence is MSKLLVVKAHPLTKEESRSVRALETFLASYRETNPSDEIEILDVYAPETNMPEIDEELLSAWGALRAGAAFETLSENQQQKVARFNELTDQFLSADKVVIANPMWNLNVPTRLKAWVDTINVAGKTFQYTAEGPKPLTSGKKALHIQSNGGFYEGKDFASQYIKAILNFIGVDQVDGLFIEGIDHFPDRAEELLNTAMTKATEYGKTF.

Residues histidine 10, 17–19 (SRS), 104–107 (MWNL), 148–153 (SNGGFY), and aspartate 184 each bind FMN.

The protein belongs to the azoreductase type 1 family. In terms of assembly, homodimer. FMN is required as a cofactor.

It carries out the reaction 2 a quinone + NADH + H(+) = 2 a 1,4-benzosemiquinone + NAD(+). The enzyme catalyses N,N-dimethyl-1,4-phenylenediamine + anthranilate + 2 NAD(+) = 2-(4-dimethylaminophenyl)diazenylbenzoate + 2 NADH + 2 H(+). Its function is as follows. Quinone reductase that provides resistance to thiol-specific stress caused by electrophilic quinones. In terms of biological role, also exhibits azoreductase activity. Catalyzes the reductive cleavage of the azo bond in aromatic azo compounds to the corresponding amines. Requires NADH, but not NADPH, as an electron donor for its activity. The enzyme can also reduce a wide range of sulfonated azo dyes. The substrate preference order is methyl Red &gt; Orange II &gt; Ponceau BS &gt; Ponceau S &gt; Orange G &gt; Amaranth. The sequence is that of FMN-dependent NADH:quinone oxidoreductase from Enterococcus faecalis (strain ATCC 700802 / V583).